The primary structure comprises 425 residues: Serine--tRNA ligase (425 aa).

233–235 (TAE) serves as a coordination point for L-serine. Residue 264–266 (RRE) participates in ATP binding. Glu287 provides a ligand contact to L-serine. 351–354 (EISS) lines the ATP pocket. Ser385 lines the L-serine pocket.

This sequence belongs to the class-II aminoacyl-tRNA synthetase family. Type-1 seryl-tRNA synthetase subfamily. Homodimer. The tRNA molecule binds across the dimer.

It localises to the cytoplasm. The enzyme catalyses tRNA(Ser) + L-serine + ATP = L-seryl-tRNA(Ser) + AMP + diphosphate + H(+). It catalyses the reaction tRNA(Sec) + L-serine + ATP = L-seryl-tRNA(Sec) + AMP + diphosphate + H(+). It functions in the pathway aminoacyl-tRNA biosynthesis; selenocysteinyl-tRNA(Sec) biosynthesis; L-seryl-tRNA(Sec) from L-serine and tRNA(Sec): step 1/1. Functionally, catalyzes the attachment of serine to tRNA(Ser). Is also able to aminoacylate tRNA(Sec) with serine, to form the misacylated tRNA L-seryl-tRNA(Sec), which will be further converted into selenocysteinyl-tRNA(Sec). The protein is Serine--tRNA ligase of Prochlorococcus marinus (strain SARG / CCMP1375 / SS120).